Consider the following 91-residue polypeptide: Small ribosomal subunit protein uS17 (91 aa).

This sequence belongs to the universal ribosomal protein uS17 family. As to quaternary structure, part of the 30S ribosomal subunit.

Its function is as follows. One of the primary rRNA binding proteins, it binds specifically to the 5'-end of 16S ribosomal RNA. This Salinispora tropica (strain ATCC BAA-916 / DSM 44818 / JCM 13857 / NBRC 105044 / CNB-440) protein is Small ribosomal subunit protein uS17.